A 112-amino-acid polypeptide reads, in one-letter code: K(+)/H(+) antiporter modulator KhtS (112 aa).

Residues 42–64 (YVPMSSYPQETQSAKTPSPGSMH) form a disordered region. Residues 47-60 (SYPQETQSAKTPSP) show a composition bias toward polar residues.

It localises to the cell membrane. In terms of biological role, modulates the activity of the potassium/proton antiporter KhtU. Involved in protection of the cell from methylglyoxal, a toxic by-product of glycolysis. This chain is K(+)/H(+) antiporter modulator KhtS, found in Bacillus subtilis (strain 168).